A 293-amino-acid polypeptide reads, in one-letter code: Homoserine kinase (293 aa).

84 to 94 (PLSRGLGSSSA) serves as a coordination point for ATP.

This sequence belongs to the GHMP kinase family. Homoserine kinase subfamily.

The protein localises to the cytoplasm. It carries out the reaction L-homoserine + ATP = O-phospho-L-homoserine + ADP + H(+). The protein operates within amino-acid biosynthesis; L-threonine biosynthesis; L-threonine from L-aspartate: step 4/5. Catalyzes the ATP-dependent phosphorylation of L-homoserine to L-homoserine phosphate. The polypeptide is Homoserine kinase (Aliarcobacter butzleri (strain RM4018) (Arcobacter butzleri)).